The sequence spans 263 residues: Bidirectional sugar transporter SWEET3 (263 aa).

The Extracellular segment spans residues 1 to 7 (MGDKLRL). Residues 8 to 28 (SIGILGNGASLLLYTAPIVTF) form a helical membrane-spanning segment. A MtN3/slv 1 domain is found at 9 to 97 (IGILGNGASL…FIYFYYASPK (89 aa)). Topologically, residues 29–42 (SRVFKKKSTEEFSC) are cytoplasmic. The helical transmembrane segment at 43-63 (FPYVMTLFNCLIYTWYGLPIV) threads the bilayer. The Extracellular segment spans residues 64–71 (SHLWENLP). Residues 72–92 (LVTINGVGILLESIFIFIYFY) form a helical membrane-spanning segment. Topologically, residues 93-103 (YASPKEKIKVG) are cytoplasmic. A helical transmembrane segment spans residues 104 to 124 (VTFVPVIVGFGLTTAISALVF). The Extracellular portion of the chain corresponds to 125–132 (DDHRHRKS). The chain crosses the membrane as a helical span at residues 133-153 (FVGSVGLVASISMYGSPLVVM). A MtN3/slv 2 domain is found at 133 to 217 (FVGSVGLVAS…ILYFKYKNKK (85 aa)). Over 154–165 (KKVIETRSVEYM) the chain is Cytoplasmic. The chain crosses the membrane as a helical span at residues 166–186 (PFYLSFFSFLASSLWLAYGLL). Residues 187–190 (SHDL) lie on the Extracellular side of the membrane. Residues 191-211 (FLASPNMVATPLGILQLILYF) form a helical membrane-spanning segment. Residues 212–263 (KYKNKKDLAPTTMVITKRNDHDDKNKATLEFVVDVDRNSDTNEKNSNNASSI) lie on the Cytoplasmic side of the membrane.

This sequence belongs to the SWEET sugar transporter family. Forms heterooligomers with SWEET11, SWEET13 and SWEET17.

The protein localises to the cell membrane. Mediates both low-affinity uptake and efflux of sugar across the plasma membrane. The protein is Bidirectional sugar transporter SWEET3 of Arabidopsis thaliana (Mouse-ear cress).